Reading from the N-terminus, the 282-residue chain is uncharacterized protein (282 aa).

This is an uncharacterized protein from Escherichia coli (strain K12).